We begin with the raw amino-acid sequence, 93 residues long: UPF0358 protein OB1428 (93 aa).

This sequence belongs to the UPF0358 family.

This is UPF0358 protein OB1428 from Oceanobacillus iheyensis (strain DSM 14371 / CIP 107618 / JCM 11309 / KCTC 3954 / HTE831).